A 445-amino-acid chain; its full sequence is Chromosomal replication initiator protein DnaA (445 aa).

Residues 1–71 are domain I, interacts with DnaA modulators; that stretch reads MEEVWLQAQS…SVQSLTDSQT (71 aa). The segment at 71-108 is domain II; that stretch reads TKIELLIAKPKTEKPKQPAASEVTAAEPEACSGPDHST. A disordered region spans residues 83–106; it reads EKPKQPAASEVTAAEPEACSGPDH. The interval 109 to 325 is domain III, AAA+ region; sequence NLNPKYTFDT…GMLIRLGAVS (217 aa). The ATP site is built by G153, G155, K156, and T157. The tract at residues 326–445 is domain IV, binds dsDNA; that stretch reads SLTGKNITLD…VDTLRKGLLS (120 aa).

It belongs to the DnaA family. As to quaternary structure, oligomerizes as a right-handed, spiral filament on DNA at oriC.

Its subcellular location is the cytoplasm. Functionally, plays an essential role in the initiation and regulation of chromosomal replication. ATP-DnaA binds to the origin of replication (oriC) to initiate formation of the DNA replication initiation complex once per cell cycle. Binds the DnaA box (a 9 base pair repeat at the origin) and separates the double-stranded (ds)DNA. Forms a right-handed helical filament on oriC DNA; dsDNA binds to the exterior of the filament while single-stranded (ss)DNA is stabiized in the filament's interior. The ATP-DnaA-oriC complex binds and stabilizes one strand of the AT-rich DNA unwinding element (DUE), permitting loading of DNA polymerase. After initiation quickly degrades to an ADP-DnaA complex that is not apt for DNA replication. Binds acidic phospholipids. The chain is Chromosomal replication initiator protein DnaA from Geobacter sulfurreducens (strain ATCC 51573 / DSM 12127 / PCA).